The sequence spans 60 residues: AAAAGDSAASDLLGDNILRSEDPPMSIDLTFHMLRNMIHMAKMEGEREQAQINRNLLDEV.

The segment covering 1–14 (AAAAGDSAASDLLG) has biased composition (low complexity). Positions 1 to 22 (AAAAGDSAASDLLGDNILRSED) are disordered. Residue V60 is modified to Valine amide.

This sequence belongs to the sauvagine/corticotropin-releasing factor/urotensin I family.

It is found in the secreted. In terms of biological role, urotensin is found in the teleost caudal neurosecretory system. It has a suggested role in osmoregulation and as a corticotropin-releasing factor. The non-hormonal portion of this precursor may be a urotensin binding protein, urophysin. The chain is UI from Platichthys flesus (European flounder).